Reading from the N-terminus, the 379-residue chain is Probable pectin lyase A (379 aa).

Positions 1–20 are cleaved as a signal peptide; that stretch reads MKYSTIFSAAAAVFAGSAAA. Cystine bridges form between Cys-83-Cys-102 and Cys-92-Cys-226. Asn-129 carries an N-linked (GlcNAc...) asparagine glycan. Residue Arg-256 is part of the active site. The cysteines at positions 322 and 330 are disulfide-linked.

It belongs to the polysaccharide lyase 1 family.

Its subcellular location is the secreted. It carries out the reaction Eliminative cleavage of (1-&gt;4)-alpha-D-galacturonan methyl ester to give oligosaccharides with 4-deoxy-6-O-methyl-alpha-D-galact-4-enuronosyl groups at their non-reducing ends.. Functionally, pectinolytic enzymes consist of four classes of enzymes: pectin lyase, polygalacturonase, pectin methylesterase and rhamnogalacturonase. Among pectinolytic enzymes, pectin lyase is the most important in depolymerization of pectin, since it cleaves internal glycosidic bonds of highly methylated pectins. The chain is Probable pectin lyase A (pelA) from Aspergillus niger (strain ATCC MYA-4892 / CBS 513.88 / FGSC A1513).